The sequence spans 743 residues: MRATLFCLCLCLLGTVLPTPVSLPARARGNCPGQHQILLKGCNTKHGFYIFQYIYSHLMQKNQTQVKKEEGDHQGTIHGHWLGKVDGEAPGQGAGSSHVPEDKDSPKTHSHITPASKGEGRALRPGIGDSNSVYPTSTSVEGSGDMGSILLGEIINGEDGLPQSTHPGGPHGDGDGGNGVLVDGAVTAGRERASGSEGAGSEGGSHAPVPDQGQAGTMGTGDSAITSVTDSAITSVTKKEDVHVDTEGIDEFAYIPDVDAVTITRGQDGETHISPEDEVKIFIGRANIQVGENDSSVGSAGATSEANVIPTVVTVRPQGHPEESATMATLHHGDSVTSRPVGHPSVGNSGDGATEIHSGQELEAPSPWESTGGDATVTMAVGVQSGKGRSGQRALGKHSLPATMTTRGGRGTASSGLTTGDCSTAASTPSRKGSHVVSAGQGESGEVGTAGPERQRARVQQEVAPARGVVGGMVVPEGHRARVQQEVAPARGVVGGMVVPEGHRARTQPEVASAPSTVGKAAPERHRNRAQQEVAPVPSMVVETVAPERHRARVRPESARLGQAARPEVAPAPSTGGRIVAPGGHRARVWPGAAPAPGVVGVARPAPSKAYNGDKRVAIGKSTDVPRDPWVWGSAHPQAQHTRGSTVAGGFAHLHRGQRLGGLTEMEHSRQVEQVRHADRLRLHERAVYGLSGVGGPLQPPAVHTDPWSADSSQSSEGRWGSHSDSHEEDGEVRGYPYGRQSL.

Positions 1 to 18 are cleaved as a signal peptide; it reads MRATLFCLCLCLLGTVLP. Cys31 and Cys42 are oxidised to a cystine. Residue Asn62 is glycosylated (N-linked (GlcNAc...) asparagine). The interval 68–225 is disordered; that stretch reads KEEGDHQGTI…GTMGTGDSAI (158 aa). The span at 129–141 shows a compositional bias: polar residues; sequence DSNSVYPTSTSVE. Residues 169–179 show a composition bias toward gly residues; it reads GPHGDGDGGNG. N-linked (GlcNAc...) asparagine; partial glycosylation is present at Asn293. Disordered stretches follow at residues 333 to 356, 385 to 454, 505 to 534, 549 to 577, 628 to 649, and 692 to 743; these read GDSV…ATEI, SGKG…GPER, ARTQ…QQEV, RHRA…STGG, DPWV…TVAG, and SGVG…RQSL. The segment covering 402-420 has biased composition (low complexity); the sequence is ATMTTRGGRGTASSGLTTG. The segment covering 421–431 has biased composition (polar residues); the sequence is DCSTAASTPSR. Over residues 549–558 the composition is skewed to basic and acidic residues; sequence RHRARVRPES.

It belongs to the osteoregulin family. In terms of processing, asn-62 is fully glycosylated, whereas only less than 10% of Asn-293 seem to be glycosylated. In the eggshell, expressed mainly in the palisade and mammillary layers. Expression also detected in the hypertrophic zone of the epiphyseal growth plate, and in cortical and medullary bone (at protein level). Highly expressed in uterus. Not detected in the proximal oviduct, liver, magnum, duodenum and kidney.

The protein localises to the secreted. The protein resides in the extracellular space. Its subcellular location is the extracellular matrix. Major component of the eggshell matrix. May play an important role in the regulation of calcite growth during eggshell calcification. May also regulate the mineralization process in developing and growing bones. The polypeptide is Ovocleidin-116 (Gallus gallus (Chicken)).